Here is a 334-residue protein sequence, read N- to C-terminus: GTP 3',8-cyclase (334 aa).

Residues 13-239 (RFHRKFYYLR…KVKAANDGPA (227 aa)) form the Radical SAM core domain. Arginine 22 contacts GTP. 2 residues coordinate [4Fe-4S] cluster: cysteine 29 and cysteine 33. Residue tyrosine 35 coordinates S-adenosyl-L-methionine. Cysteine 36 contributes to the [4Fe-4S] cluster binding site. Arginine 73 contacts GTP. Glycine 77 contributes to the S-adenosyl-L-methionine binding site. Position 104 (threonine 104) interacts with GTP. Residue serine 128 participates in S-adenosyl-L-methionine binding. Position 165 (lysine 165) interacts with GTP. Methionine 199 contributes to the S-adenosyl-L-methionine binding site. The [4Fe-4S] cluster site is built by cysteine 262 and cysteine 265. 267–269 (RLR) is a GTP binding site. A [4Fe-4S] cluster-binding site is contributed by cysteine 279.

The protein belongs to the radical SAM superfamily. MoaA family. In terms of assembly, monomer and homodimer. [4Fe-4S] cluster serves as cofactor.

The catalysed reaction is GTP + AH2 + S-adenosyl-L-methionine = (8S)-3',8-cyclo-7,8-dihydroguanosine 5'-triphosphate + 5'-deoxyadenosine + L-methionine + A + H(+). It participates in cofactor biosynthesis; molybdopterin biosynthesis. Its function is as follows. Catalyzes the cyclization of GTP to (8S)-3',8-cyclo-7,8-dihydroguanosine 5'-triphosphate. This chain is GTP 3',8-cyclase, found in Vibrio vulnificus (strain YJ016).